Reading from the N-terminus, the 95-residue chain is Aspartyl/glutamyl-tRNA(Asn/Gln) amidotransferase subunit C (95 aa).

The disordered stretch occupies residues 74-95 (GQALEPAPDADNEHFLVPQVVE).

Belongs to the GatC family. In terms of assembly, heterotrimer of A, B and C subunits.

The enzyme catalyses L-glutamyl-tRNA(Gln) + L-glutamine + ATP + H2O = L-glutaminyl-tRNA(Gln) + L-glutamate + ADP + phosphate + H(+). It catalyses the reaction L-aspartyl-tRNA(Asn) + L-glutamine + ATP + H2O = L-asparaginyl-tRNA(Asn) + L-glutamate + ADP + phosphate + 2 H(+). Functionally, allows the formation of correctly charged Asn-tRNA(Asn) or Gln-tRNA(Gln) through the transamidation of misacylated Asp-tRNA(Asn) or Glu-tRNA(Gln) in organisms which lack either or both of asparaginyl-tRNA or glutaminyl-tRNA synthetases. The reaction takes place in the presence of glutamine and ATP through an activated phospho-Asp-tRNA(Asn) or phospho-Glu-tRNA(Gln). The protein is Aspartyl/glutamyl-tRNA(Asn/Gln) amidotransferase subunit C of Salinibacter ruber (strain DSM 13855 / M31).